The primary structure comprises 225 residues: 2-C-methyl-D-erythritol 4-phosphate cytidylyltransferase (225 aa).

This sequence belongs to the IspD/TarI cytidylyltransferase family. IspD subfamily.

It carries out the reaction 2-C-methyl-D-erythritol 4-phosphate + CTP + H(+) = 4-CDP-2-C-methyl-D-erythritol + diphosphate. Its pathway is isoprenoid biosynthesis; isopentenyl diphosphate biosynthesis via DXP pathway; isopentenyl diphosphate from 1-deoxy-D-xylulose 5-phosphate: step 2/6. Its function is as follows. Catalyzes the formation of 4-diphosphocytidyl-2-C-methyl-D-erythritol from CTP and 2-C-methyl-D-erythritol 4-phosphate (MEP). The chain is 2-C-methyl-D-erythritol 4-phosphate cytidylyltransferase from Cereibacter sphaeroides (strain ATCC 17029 / ATH 2.4.9) (Rhodobacter sphaeroides).